A 202-amino-acid polypeptide reads, in one-letter code: Xanthine phosphoribosyltransferase (202 aa).

Positions 20 and 27 each coordinate xanthine. 5-phospho-alpha-D-ribose 1-diphosphate is bound at residue 128-132 (ASGGT). Lys-156 is a binding site for xanthine.

This sequence belongs to the purine/pyrimidine phosphoribosyltransferase family. Xpt subfamily. As to quaternary structure, homodimer.

Its subcellular location is the cytoplasm. It catalyses the reaction XMP + diphosphate = xanthine + 5-phospho-alpha-D-ribose 1-diphosphate. It participates in purine metabolism; XMP biosynthesis via salvage pathway; XMP from xanthine: step 1/1. Its function is as follows. Converts the preformed base xanthine, a product of nucleic acid breakdown, to xanthosine 5'-monophosphate (XMP), so it can be reused for RNA or DNA synthesis. This chain is Xanthine phosphoribosyltransferase, found in Deinococcus geothermalis (strain DSM 11300 / CIP 105573 / AG-3a).